A 311-amino-acid chain; its full sequence is Methionyl-tRNA formyltransferase (311 aa).

Ser109–Pro112 serves as a coordination point for (6S)-5,6,7,8-tetrahydrofolate.

It belongs to the Fmt family.

The enzyme catalyses L-methionyl-tRNA(fMet) + (6R)-10-formyltetrahydrofolate = N-formyl-L-methionyl-tRNA(fMet) + (6S)-5,6,7,8-tetrahydrofolate + H(+). Attaches a formyl group to the free amino group of methionyl-tRNA(fMet). The formyl group appears to play a dual role in the initiator identity of N-formylmethionyl-tRNA by promoting its recognition by IF2 and preventing the misappropriation of this tRNA by the elongation apparatus. The protein is Methionyl-tRNA formyltransferase of Staphylococcus aureus (strain JH1).